A 551-amino-acid chain; its full sequence is ATP-dependent RNA helicase MRH4, mitochondrial (551 aa).

A mitochondrion-targeting transit peptide spans 1 to 13; sequence MPPNLTPRSFNRD. The short motif at 43–73 is the Q motif element; sequence RTFDDFGLEEGLVKSLKGLYGEDGKTTPIET. The Helicase ATP-binding domain maps to 85–293; that stretch reads ASAPIGSQRV…TTNPFFTKKE (209 aa). 98 to 105 lines the ATP pocket; it reads AETGSGKT. A DEAD box motif is present at residues 242–245; the sequence is DEAD. The Helicase C-terminal domain occupies 334–551; that stretch reads TLAEDAKAAK…VGAMGKRVRT (218 aa). Residues 504–527 are disordered; sequence LGEGAKNNKGGKGQGPLKKDGKTA.

Belongs to the DEAD box helicase family. MRH4 subfamily.

The protein localises to the mitochondrion. The enzyme catalyses ATP + H2O = ADP + phosphate + H(+). Functionally, ATP-binding RNA helicase involved in mitochondrial RNA metabolism. Required for maintenance of mitochondrial DNA. In Cryptococcus neoformans var. neoformans serotype D (strain B-3501A) (Filobasidiella neoformans), this protein is ATP-dependent RNA helicase MRH4, mitochondrial (MRH4).